We begin with the raw amino-acid sequence, 515 residues long: Glucose-6-phosphate 1-dehydrogenase (515 aa).

Ala2 carries the post-translational modification N-acetylalanine. Ser8 carries the post-translational modification Phosphoserine. Thr10 is subject to Phosphothreonine. Position 38-45 (38-45 (GASGDLAK)) interacts with NADP(+). Lys89 bears the N6-acetyllysine mark. Positions 147 and 171 each coordinate NADP(+). Residues Lys171, 201-205 (HYLGK), Glu239, and Glu258 each bind D-glucose 6-phosphate. Lys171 carries the post-translational modification N6-(2-hydroxyisobutyryl)lysine; alternate. Lys171 is modified (N6-acetyllysine; alternate). NADP(+) is bound at residue Arg357. Lys360 and Arg365 together coordinate D-glucose 6-phosphate. Positions 366, 370, and 393 each coordinate NADP(+). Gln395 is a D-glucose 6-phosphate binding site. NADP(+) contacts are provided by residues 401-403 (YTK) and 421-423 (DLT). Lys403 is modified (N6-acetyllysine). Position 432 is an N6-acetyllysine (Lys432). Residue Arg487 coordinates NADP(+). N6-acetyllysine is present on Lys497. Residues Tyr503 and Trp509 each contribute to the NADP(+) site. Tyr503 carries the phosphotyrosine modification.

The protein belongs to the glucose-6-phosphate dehydrogenase family. Homotetramer; dimer of dimers. Interacts with SIRT2; the interaction is enhanced by H(2)O(2) treatment. Forms a ternary complex with ALDOB and TP53; this interaction is direct. ALDOB stabilizes the complex inhibiting G6PD activity and keeping oxidative pentose phosphate metabolism in check. Acetylated by ELP3 at Lys-403; acetylation inhibits its homodimerization and enzyme activity. Deacetylated by SIRT2 at Lys-403; deacetylation stimulates its enzyme activity.

It is found in the cytoplasm. The protein localises to the cytosol. Its subcellular location is the membrane. The enzyme catalyses D-glucose 6-phosphate + NADP(+) = 6-phospho-D-glucono-1,5-lactone + NADPH + H(+). It participates in carbohydrate degradation; pentose phosphate pathway; D-ribulose 5-phosphate from D-glucose 6-phosphate (oxidative stage): step 1/3. In terms of biological role, cytosolic glucose-6-phosphate dehydrogenase that catalyzes the first and rate-limiting step of the oxidative branch within the pentose phosphate pathway/shunt, an alternative route to glycolysis for the dissimilation of carbohydrates and a major source of reducing power and metabolic intermediates for fatty acid and nucleic acid biosynthetic processes. In Bos indicus (Zebu), this protein is Glucose-6-phosphate 1-dehydrogenase (G6PD).